We begin with the raw amino-acid sequence, 131 residues long: Glycine cleavage system H protein (131 aa).

Residues 24–106 enclose the Lipoyl-binding domain; that stretch reads RAIVGISDHA…YGEGWIMVIE (83 aa). Lys-65 bears the N6-lipoyllysine mark.

The protein belongs to the GcvH family. As to quaternary structure, the glycine cleavage system is composed of four proteins: P, T, L and H. It depends on (R)-lipoate as a cofactor.

Its function is as follows. The glycine cleavage system catalyzes the degradation of glycine. The H protein shuttles the methylamine group of glycine from the P protein to the T protein. The chain is Glycine cleavage system H protein from Xylella fastidiosa (strain M12).